The primary structure comprises 119 residues: Ribonuclease P protein component (119 aa).

The protein belongs to the RnpA family. In terms of assembly, consists of a catalytic RNA component (M1 or rnpB) and a protein subunit.

The catalysed reaction is Endonucleolytic cleavage of RNA, removing 5'-extranucleotides from tRNA precursor.. In terms of biological role, RNaseP catalyzes the removal of the 5'-leader sequence from pre-tRNA to produce the mature 5'-terminus. It can also cleave other RNA substrates such as 4.5S RNA. The protein component plays an auxiliary but essential role in vivo by binding to the 5'-leader sequence and broadening the substrate specificity of the ribozyme. The polypeptide is Ribonuclease P protein component (Histophilus somni (strain 129Pt) (Haemophilus somnus)).